The chain runs to 1075 residues: Atos homolog protein A (1075 aa).

Residues 24 to 32 are transactivation domain 1 (TAD1); that stretch reads ALLITEGRT. Disordered stretches follow at residues 430–469, 570–592, and 703–766; these read FGSPEFGSPGDSREGKVREKSETRPGETCTSHSLYPRQPA, YSPQEKPLKPEVRTQHQNHPDSI, and LNKN…PHSV. Residues 440-454 show a composition bias toward basic and acidic residues; that stretch reads DSREGKVREKSETRP. Residues 703–712 show a composition bias toward polar residues; it reads LNKNKTNCSS. A compositionally biased stretch (basic and acidic residues) spans 746 to 759; sequence DRLKTEQEAKRDSG. Residues 878-935 are required for macropage invasion; the sequence is LLGNFEESVLNYRLDPLGIVDGFTAEVGASGTFCPTHLTLPVEVSFYSVSDDNAPSPY. A transactivation domain 2 (TAD2) region spans residues 962–970; it reads FNPNKTVVK.

It belongs to the ATOS family.

The protein localises to the nucleus. Functionally, transcription regulator that syncronizes transcriptional and translational programs to promote macrophage invasion of tissues. This is Atos homolog protein A (Atosa) from Mus musculus (Mouse).